A 467-amino-acid polypeptide reads, in one-letter code: MAGQTLFQKLWDAHVVHVEPDGTTLLYIDRHLVHEVTSPQAFEGLKLAQRLPRRPDAAIAVPDHNVPTTDRSQGIADPVSRLQVETLDANCAEFGITEFRMDDVRQGIVHVIGPEEGLTLPGMTVVCGDSHTSTHGAFGALAFGIGTSEVEHVLATQCLWQKPSKTMLVKVEGELGKGVTAKDIALAVIGRIGTAGGTGYAIEFGGAAIRALSMEGRMTLCNMAIEAGARAGMVAVDQTTIDYVEGRPYAPTGEAWDTAVAWWKTLHSDADAVFDRVVELDAAAIEPQVTWGTSPEMVTTVGASVPDPSAAPSEVKRQDWVRALEYMGLAAGTPVSAIALDKVFIGSCTNSRIEDLREAAAVAKGRRVAPNVKLAMVVPGSGLVKQQAEAEGLDRIFIDAGFEWREPGCSMCLAMNADRLEPGERCASTSNRNFEGRQGQGGRTHLVSPAMAAAAACAGHFVDVRNF.

[4Fe-4S] cluster contacts are provided by Cys-348, Cys-409, and Cys-412.

The protein belongs to the aconitase/IPM isomerase family. LeuC type 1 subfamily. Heterodimer of LeuC and LeuD. [4Fe-4S] cluster serves as cofactor.

The catalysed reaction is (2R,3S)-3-isopropylmalate = (2S)-2-isopropylmalate. Its pathway is amino-acid biosynthesis; L-leucine biosynthesis; L-leucine from 3-methyl-2-oxobutanoate: step 2/4. In terms of biological role, catalyzes the isomerization between 2-isopropylmalate and 3-isopropylmalate, via the formation of 2-isopropylmaleate. The protein is 3-isopropylmalate dehydratase large subunit of Thiobacillus denitrificans (strain ATCC 25259 / T1).